The chain runs to 236 residues: Enolase-phosphatase E1 (236 aa).

Belongs to the HAD-like hydrolase superfamily. MasA/MtnC family. As to quaternary structure, monomer. The cofactor is Mg(2+).

The enzyme catalyses 5-methylsulfanyl-2,3-dioxopentyl phosphate + H2O = 1,2-dihydroxy-5-(methylsulfanyl)pent-1-en-3-one + phosphate. It functions in the pathway amino-acid biosynthesis; L-methionine biosynthesis via salvage pathway; L-methionine from S-methyl-5-thio-alpha-D-ribose 1-phosphate: step 3/6. Its pathway is amino-acid biosynthesis; L-methionine biosynthesis via salvage pathway; L-methionine from S-methyl-5-thio-alpha-D-ribose 1-phosphate: step 4/6. In terms of biological role, bifunctional enzyme that catalyzes the enolization of 2,3-diketo-5-methylthiopentyl-1-phosphate (DK-MTP-1-P) into the intermediate 2-hydroxy-3-keto-5-methylthiopentenyl-1-phosphate (HK-MTPenyl-1-P), which is then dephosphorylated to form the acireductone 1,2-dihydroxy-3-keto-5-methylthiopentene (DHK-MTPene). The sequence is that of Enolase-phosphatase E1 from Frankia alni (strain DSM 45986 / CECT 9034 / ACN14a).